Reading from the N-terminus, the 1024-residue chain is Beta-galactosidase (1024 aa).

Positions 103 and 202 each coordinate substrate. Residue Asp202 coordinates Na(+). The Mg(2+) site is built by Glu417, His419, and Glu462. Residues Glu462 and 538 to 541 (EYAH) each bind substrate. Residue Glu462 is the Proton donor of the active site. The active-site Nucleophile is the Glu538. Residue Asn598 participates in Mg(2+) binding. Na(+) is bound by residues Phe602 and Asn605. Residues Asn605 and Trp1000 each coordinate substrate.

The protein belongs to the glycosyl hydrolase 2 family. Homotetramer. Requires Mg(2+) as cofactor. Na(+) is required as a cofactor.

It catalyses the reaction Hydrolysis of terminal non-reducing beta-D-galactose residues in beta-D-galactosides.. The sequence is that of Beta-galactosidase from Escherichia coli (strain UTI89 / UPEC).